Here is a 290-residue protein sequence, read N- to C-terminus: Formamidopyrimidine-DNA glycosylase (290 aa).

Pro-2 serves as the catalytic Schiff-base intermediate with DNA. Glu-3 functions as the Proton donor in the catalytic mechanism. The Proton donor; for beta-elimination activity role is filled by Lys-58. Positions 98, 126, and 171 each coordinate DNA. Residues 256–290 form an FPG-type zinc finger; that stretch reads FVYDRAGLPCRVCATPVRQIVQGQRSTFYCPKCQH. Residue Arg-280 is the Proton donor; for delta-elimination activity of the active site.

Belongs to the FPG family. As to quaternary structure, monomer. Zn(2+) is required as a cofactor.

It catalyses the reaction Hydrolysis of DNA containing ring-opened 7-methylguanine residues, releasing 2,6-diamino-4-hydroxy-5-(N-methyl)formamidopyrimidine.. The catalysed reaction is 2'-deoxyribonucleotide-(2'-deoxyribose 5'-phosphate)-2'-deoxyribonucleotide-DNA = a 3'-end 2'-deoxyribonucleotide-(2,3-dehydro-2,3-deoxyribose 5'-phosphate)-DNA + a 5'-end 5'-phospho-2'-deoxyribonucleoside-DNA + H(+). Its function is as follows. Involved in base excision repair of DNA damaged by oxidation or by mutagenic agents. Acts as a DNA glycosylase that recognizes and removes damaged bases. Has a preference for oxidized purines, such as 7,8-dihydro-8-oxoguanine (8-oxoG). Has AP (apurinic/apyrimidinic) lyase activity and introduces nicks in the DNA strand. Cleaves the DNA backbone by beta-delta elimination to generate a single-strand break at the site of the removed base with both 3'- and 5'-phosphates. The sequence is that of Formamidopyrimidine-DNA glycosylase from Cupriavidus taiwanensis (strain DSM 17343 / BCRC 17206 / CCUG 44338 / CIP 107171 / LMG 19424 / R1) (Ralstonia taiwanensis (strain LMG 19424)).